Reading from the N-terminus, the 108-residue chain is DNA-directed RNA polymerase subunit omega (108 aa).

Belongs to the RNA polymerase subunit omega family. The RNAP catalytic core consists of 2 alpha, 1 beta, 1 beta' and 1 omega subunit. When a sigma factor is associated with the core the holoenzyme is formed, which can initiate transcription.

It catalyses the reaction RNA(n) + a ribonucleoside 5'-triphosphate = RNA(n+1) + diphosphate. Functionally, promotes RNA polymerase assembly. Latches the N- and C-terminal regions of the beta' subunit thereby facilitating its interaction with the beta and alpha subunits. This chain is DNA-directed RNA polymerase subunit omega, found in Mycolicibacterium paratuberculosis (strain ATCC BAA-968 / K-10) (Mycobacterium paratuberculosis).